Reading from the N-terminus, the 220-residue chain is MMKCLFLLCLCLLPIVVFSSTFTSQNLIDLPSESPLPKPVLDTNGKELNPDSSYRIISIGRGALGGDVYLGKSPNSDAPCPDGVFRYNSDVGPSGTPVRFIPLSGGIFEDQLLNIQFNIPTVKLCVSYTIWKVGNLNAYFRTMLLETGGTIGQADSSYFKIVKLSNFGYNLLYCPITPPFLCPFCRDDNFCAKVGVVIQNGKRRLALVNENPLDVLFQEV.

Positions Met1–Thr23 are cleaved as a signal peptide. The propeptide occupies Ser24–Ser32. 2 disulfides stabilise this stretch: Cys80–Cys125 and Cys174–Cys185.

It belongs to the protease inhibitor I3 (leguminous Kunitz-type inhibitor) family.

It localises to the vacuole. Inhibitor of cathepsin D (aspartic protease) and trypsin (serine protease). May protect the plant by inhibiting proteases of invading organisms. This chain is Aspartic protease inhibitor 8, found in Solanum tuberosum (Potato).